Here is a 148-residue protein sequence, read N- to C-terminus: uncharacterized protein (148 aa).

The 62-residue stretch at 4-65 (LDKVDIQLVK…IPDLDKLGYM (62 aa)) folds into the HTH asnC-type domain. Residues 23–42 (YRELAELMNTTRQRIARRIT) constitute a DNA-binding region (H-T-H motif).

This is an uncharacterized protein from Pyrococcus abyssi (strain GE5 / Orsay).